We begin with the raw amino-acid sequence, 116 residues long: Biogenesis of lysosome-related organelles complex 1 subunit CNL1 (116 aa).

Residues 63–95 are a coiled coil; sequence DIVDVNIQSFKDILSKCEELENYFTMLDQIEMI.

It belongs to the BLOC1S4 family. Component of the biogenesis of lysosome-related organelles complex-1 (BLOC-1).

Its subcellular location is the cytoplasm. Functionally, component of the biogenesis of lysosome-related organelles complex-1 (BLOC-1), a complex that is involved in endosomal cargo sorting. This is Biogenesis of lysosome-related organelles complex 1 subunit CNL1 (CLN1) from Vanderwaltozyma polyspora (strain ATCC 22028 / DSM 70294 / BCRC 21397 / CBS 2163 / NBRC 10782 / NRRL Y-8283 / UCD 57-17) (Kluyveromyces polysporus).